Reading from the N-terminus, the 671-residue chain is Arginine--tRNA ligase (671 aa).

A 'HIGH' region motif is present at residues 124–134 (PNVAKPMHVGH). The disordered stretch occupies residues 223-254 (KSDAKTAKEVSDQSESDENLKPKDKKKLRKNA). Basic and acidic residues predominate over residues 224–233 (SDAKTAKEVS).

This sequence belongs to the class-I aminoacyl-tRNA synthetase family. Monomer.

It localises to the cytoplasm. The enzyme catalyses tRNA(Arg) + L-arginine + ATP = L-arginyl-tRNA(Arg) + AMP + diphosphate. The chain is Arginine--tRNA ligase from Rhodopirellula baltica (strain DSM 10527 / NCIMB 13988 / SH1).